A 40-amino-acid polypeptide reads, in one-letter code: Unknown protein from spot 207 of 2D-PAGE of etiolated coleoptile (40 aa).

This sequence belongs to the GST superfamily. HSP26 family.

The protein is Unknown protein from spot 207 of 2D-PAGE of etiolated coleoptile of Zea mays (Maize).